A 491-amino-acid chain; its full sequence is Glutamyl-tRNA(Gln) amidotransferase subunit A (491 aa).

Active-site charge relay system residues include lysine 78 and serine 158. Catalysis depends on serine 182, which acts as the Acyl-ester intermediate.

Belongs to the amidase family. GatA subfamily. In terms of assembly, heterotrimer of A, B and C subunits.

The catalysed reaction is L-glutamyl-tRNA(Gln) + L-glutamine + ATP + H2O = L-glutaminyl-tRNA(Gln) + L-glutamate + ADP + phosphate + H(+). Functionally, allows the formation of correctly charged Gln-tRNA(Gln) through the transamidation of misacylated Glu-tRNA(Gln) in organisms which lack glutaminyl-tRNA synthetase. The reaction takes place in the presence of glutamine and ATP through an activated gamma-phospho-Glu-tRNA(Gln). The protein is Glutamyl-tRNA(Gln) amidotransferase subunit A of Nitrobacter hamburgensis (strain DSM 10229 / NCIMB 13809 / X14).